The following is a 526-amino-acid chain: MASSCLFNASVSSLNPKQDPIRRHRSTSLLRHRPVVISCTADGNNIKAPIETAVKPPHRTEDNIRDEARRNRSNAVNPFSAKYVPFNAAPGSTESYSLDEIVYRSRSGGLLDVEHDMEALKRFDGAYWRDLFDSRVGKSTWPYGSGVWSKKEWVLPEIDDDDIVSAFEGNSNLFWAERFGKQFLGMNDLWVKHCGISHTGSFKDLGMTVLVSQVNRLRKMKRPVVGVGCASTGDTSAALSAYCASAGIPSIVFLPANKISMAQLVQPIANGAFVLSIDTDFDGCMKLIREITAELPIYLANSLNSLRLEGQKTAAIEILQQFDWQVPDWVIVPGGNLGNIYAFYKGFKMCQELGLVDRIPRMVCAQAANANPLYLHYKSGWKDFKPMTASTTFASAIQIGDPVSIDRAVYALKKCNGIVEEATEEELMDAMAQADSTGMFICPHTGVALTALFKLRNQGVIAPTDRTVVVSTAHGLKFTQSKIDYHSNAIPDMACRFSNPPVDVKADFGAVMDVLKSYLGSNTLTS.

Residues M1–T40 constitute a chloroplast transit peptide. S-adenosyl-L-methionine-binding positions include P142–G144, S165–F167, N172, L173, K181, and N187. K203 is modified (N6-(pyridoxal phosphate)lysine). Pyridoxal 5'-phosphate contacts are provided by residues G335–N339 and T472.

It belongs to the threonine synthase family. Homodimer. It depends on pyridoxal 5'-phosphate as a cofactor.

It localises to the plastid. Its subcellular location is the chloroplast. It carries out the reaction O-phospho-L-homoserine + H2O = L-threonine + phosphate. It functions in the pathway amino-acid biosynthesis; L-threonine biosynthesis; L-threonine from L-aspartate: step 5/5. With respect to regulation, allosterically activated by S-adenosyl-L-methionine (SAM). Activated by S-adenosyl-L-ethionine, 5'-amino-5'-deoxyadenosine, sinefungin and 5'-deoxy-5-methylthioadenosine. Inhibited by AMP. In terms of biological role, catalyzes the gamma-elimination of phosphate from L-phosphohomoserine and the beta-addition of water to produce L-threonine. In Arabidopsis thaliana (Mouse-ear cress), this protein is Threonine synthase 1, chloroplastic (TS1).